The sequence spans 302 residues: Phospho-N-acetylmuramoyl-pentapeptide-transferase (302 aa).

A run of 10 helical transmembrane segments spans residues 1 to 21, 42 to 62, 67 to 87, 101 to 121, 123 to 143, 154 to 174, 178 to 198, 204 to 224, 229 to 249, and 279 to 299; these read MIAA…NLFR, GTPT…GVLS, VILT…FLSI, ALLQ…ETAV, FFGI…IVIV, GLDG…WFFL, GFSE…LIFN, IFMG…VSVL, FYLI…ILQI, and IVAV…EVFG.

The protein belongs to the glycosyltransferase 4 family. MraY subfamily. It depends on Mg(2+) as a cofactor.

It localises to the cell inner membrane. The enzyme catalyses UDP-N-acetyl-alpha-D-muramoyl-L-alanyl-gamma-D-glutamyl-meso-2,6-diaminopimeloyl-D-alanyl-D-alanine + di-trans,octa-cis-undecaprenyl phosphate = di-trans,octa-cis-undecaprenyl diphospho-N-acetyl-alpha-D-muramoyl-L-alanyl-D-glutamyl-meso-2,6-diaminopimeloyl-D-alanyl-D-alanine + UMP. It functions in the pathway cell wall biogenesis; peptidoglycan biosynthesis. Functionally, catalyzes the initial step of the lipid cycle reactions in the biosynthesis of the cell wall peptidoglycan: transfers peptidoglycan precursor phospho-MurNAc-pentapeptide from UDP-MurNAc-pentapeptide onto the lipid carrier undecaprenyl phosphate, yielding undecaprenyl-pyrophosphoryl-MurNAc-pentapeptide, known as lipid I. This Thermotoga neapolitana (strain ATCC 49049 / DSM 4359 / NBRC 107923 / NS-E) protein is Phospho-N-acetylmuramoyl-pentapeptide-transferase.